Here is a 162-residue protein sequence, read N- to C-terminus: uncharacterized protein (162 aa).

The chain crosses the membrane as a helical span at residues 6-24 (SYLISIFYIILITSETTAF).

It localises to the membrane. This is an uncharacterized protein from Caenorhabditis elegans.